The chain runs to 664 residues: uncharacterized protein (664 aa).

The N-terminal stretch at 1–35 (MGVSVLTFHVSLFLKRILSIAFFLLSLSTLLRIVN) is a signal peptide. 2 N-linked (GlcNAc...) asparagine glycosylation sites follow: N101 and N138. Sel1-like repeat units follow at residues 141–178 (AFANNMMGFFYSTSFSEYASNNPALARIHWELAAKQGS) and 179–214 (LDAHQFLAYHNLIALNMPQSDEEAVKHYKFISDHLF). N221, N300, and N371 each carry an N-linked (GlcNAc...) asparagine glycan. Sel1-like repeat units lie at residues 337-372 (AQSCGYLGLLHLFDKGPLFDIDKAYWWFKRGATKND), 373-409 (SNSYYGLGYMAYHGLTSNGVDREKGMRLINLAVMNEN), 410-441 (PHALMFLGLIRLEEARYEEAYHLFLRAATQKS), and 442-477 (VISYKYLADCYYNGTGTSRSMISASLYYKKFVEAIR). N-linked (GlcNAc...) asparagine glycans are attached at residues N454 and N537. Sel1-like repeat units follow at residues 564 to 599 (IDAIFKLGDYYYYGIGTPKDYSKAYTCYKIAYEQSS) and 601 to 636 (GMGLWNMAYMHEYGIGRDQDIYIARRLLDELSSNQN).

The protein belongs to the sel-1 family.

This is an uncharacterized protein from Schizosaccharomyces pombe (strain 972 / ATCC 24843) (Fission yeast).